We begin with the raw amino-acid sequence, 191 residues long: Imidazoleglycerol-phosphate dehydratase (191 aa).

The protein belongs to the imidazoleglycerol-phosphate dehydratase family.

The protein resides in the cytoplasm. The catalysed reaction is D-erythro-1-(imidazol-4-yl)glycerol 3-phosphate = 3-(imidazol-4-yl)-2-oxopropyl phosphate + H2O. Its pathway is amino-acid biosynthesis; L-histidine biosynthesis; L-histidine from 5-phospho-alpha-D-ribose 1-diphosphate: step 6/9. The polypeptide is Imidazoleglycerol-phosphate dehydratase (Thermodesulfovibrio yellowstonii (strain ATCC 51303 / DSM 11347 / YP87)).